The chain runs to 289 residues: Secretory carrier-associated membrane protein (289 aa).

The interval 1 to 65 (MAGRYDPNPF…TSTDGKKKER (65 aa)) is disordered. The Cytoplasmic segment spans residues 1–123 (MAGRYDPNPF…EIPIHLRTLQ (123 aa)). Positions 16 to 31 (NPFSNPRSAASATNSR) are enriched in polar residues. A coiled-coil region spans residues 59–98 (DGKKKERDLQAKEAELRKREQEVRRKEEAIARAGIVIEEK). 4 helical membrane passes run 124–144 (YVAF…VVSV), 156–176 (IWFL…ALWY), 191–211 (FGWF…AAVA), and 239–259 (IFYF…IWVI). At 260 to 289 (QQVYMHFRGGGKTAEMKREAALGAMGAALR) the chain is on the cytoplasmic side.

This sequence belongs to the SCAMP family.

The protein resides in the cell membrane. Its subcellular location is the cytoplasmic vesicle. The protein localises to the secretory vesicle membrane. Its function is as follows. Probably involved in membrane trafficking. The polypeptide is Secretory carrier-associated membrane protein (PSAM2) (Pisum sativum (Garden pea)).